Here is a 205-residue protein sequence, read N- to C-terminus: Urease accessory protein UreE (205 aa).

The segment covering 178 to 196 (AHFHAGGHGHVHSGHGHGG) has biased composition (basic residues). Positions 178–205 (AHFHAGGHGHVHSGHGHGGKHGEHDAES) are disordered.

The protein belongs to the UreE family.

The protein localises to the cytoplasm. Involved in urease metallocenter assembly. Binds nickel. Probably functions as a nickel donor during metallocenter assembly. This Bordetella pertussis (strain Tohama I / ATCC BAA-589 / NCTC 13251) protein is Urease accessory protein UreE.